Consider the following 288-residue polypeptide: uncharacterized protein (288 aa).

Positions 5–81 (GNVLNKIGSL…LELSIELATK (77 aa)) constitute an HTH rpiR-type domain. Residues 41–60 (LSEIAKHLQVGEATLVRFCR) constitute a DNA-binding region (H-T-H motif). In terms of domain architecture, SIS spans 129–269 (VVKVLKKARR…YALLVQGEED (141 aa)).

This is an uncharacterized protein from Haemophilus influenzae (strain ATCC 51907 / DSM 11121 / KW20 / Rd).